We begin with the raw amino-acid sequence, 210 residues long: 3-demethoxyubiquinol 3-hydroxylase (210 aa).

Fe cation is bound by residues E59, E89, H92, E141, E173, and H176.

Belongs to the COQ7 family. The cofactor is Fe cation.

The protein localises to the cell membrane. It catalyses the reaction a 5-methoxy-2-methyl-3-(all-trans-polyprenyl)benzene-1,4-diol + AH2 + O2 = a 3-demethylubiquinol + A + H2O. It participates in cofactor biosynthesis; ubiquinone biosynthesis. Catalyzes the hydroxylation of 2-nonaprenyl-3-methyl-6-methoxy-1,4-benzoquinol during ubiquinone biosynthesis. In Marinomonas sp. (strain MWYL1), this protein is 3-demethoxyubiquinol 3-hydroxylase.